Here is a 144-residue protein sequence, read N- to C-terminus: Putative acetyltransferase SAOUHSC_00995 (144 aa).

In terms of domain architecture, N-acetyltransferase spans methionine 1 to threonine 141. Residues valine 71 to valine 73, glycine 79, and proline 112 to tyrosine 114 contribute to the CoA site.

It belongs to the UPF0039 (ElaA) family.

Could catalyze the transfer of an acetyl group from acetyl coenzyme A (AcCoA) to an acceptor substrate and release both CoA and the acetylated product. This Staphylococcus aureus (strain NCTC 8325 / PS 47) protein is Putative acetyltransferase SAOUHSC_00995.